Consider the following 103-residue polypeptide: Large ribosomal subunit protein eL30 (103 aa).

It belongs to the eukaryotic ribosomal protein eL30 family.

The chain is Large ribosomal subunit protein eL30 from Methanosarcina mazei (strain ATCC BAA-159 / DSM 3647 / Goe1 / Go1 / JCM 11833 / OCM 88) (Methanosarcina frisia).